Here is a 257-residue protein sequence, read N- to C-terminus: Melatonin receptor type 1A (257 aa).

Residues 5 to 22 (LASIVNDGWSLSSLHCQL) are Extracellular-facing. Cysteine 20 and cysteine 97 are joined by a disulfide. A helical transmembrane segment spans residues 23–43 (SGFLMGLSVIGSVFNITGIAI). The Cytoplasmic portion of the chain corresponds to 44–64 (NRYCCICHSLRYNKLYSSTNS). A helical transmembrane segment spans residues 65–85 (LCYVFLIWMLTLVAIVPNLCV). Over 86–107 (GTLQYDPRIYSCTFTQSVSSAY) the chain is Extracellular. Residues 108–128 (TIAVVVFHFIVPMLVVIFCYL) traverse the membrane as a helical segment. At 129–160 (RIWALVLQVRWRVKPDNKPKLKPQDFRNFVTM) the chain is on the cytoplasmic side. A helical membrane pass occupies residues 161-181 (FVVFVLFAICWAPLNFIGLVV). The Extracellular segment spans residues 182–194 (ASEPASMAPRIPE). A helical transmembrane segment spans residues 195-215 (WLFVASYYMGYFNSCLNAIIY). Over 216 to 257 (GLLNQNFRQEYRKIIVSLCTTKMFFVDSSNHVAHRIKRKPSP) the chain is Cytoplasmic.

Belongs to the G-protein coupled receptor 1 family.

The protein resides in the cell membrane. In terms of biological role, high affinity receptor for melatonin. Likely to mediate the reproductive and circadian actions of melatonin. The activity of this receptor is mediated by pertussis toxin sensitive G proteins that inhibit adenylate cyclase activity. Possibly involved in sleep induction, by melatonin activation of the potassium channel KCNMA1/BK and the dissociation of G-beta and G-gamma subunits, thereby decreasing synaptic transmission. The chain is Melatonin receptor type 1A (MTNR1A) from Bos taurus (Bovine).